Consider the following 379-residue polypeptide: Odorant receptor 23a (379 aa).

Residues 1–36 (MKLSETLKIDYFRVQLNAWRICGALDLSEGRYWSWS) are Cytoplasmic-facing. The helical transmembrane segment at 37-57 (MLLCILVYLPTPMLLRGVYSF) threads the bilayer. The Extracellular segment spans residues 58–64 (EDPVENN). An N-linked (GlcNAc...) asparagine glycan is attached at asparagine 64. A helical transmembrane segment spans residues 65 to 85 (FSLSLTVTSLSNLMKFCMYVA). Topologically, residues 86-125 (QLTKMVEVQSLIGQLDARVSGESQSERHRNMTEHLLRMSK) are cytoplasmic. Residues 126 to 146 (LFQITYAVVFIIAAVPFVFET) traverse the membrane as a helical segment. The Extracellular segment spans residues 147 to 162 (ELSLPMPMWFPFDWKN). A helical transmembrane segment spans residues 163 to 183 (SMVAYIGALVFQEIGYVFQIM). At 184–253 (QCFAADSFPP…TKSLVSYPMM (70 aa)) the chain is on the cytoplasmic side. The helical transmembrane segment at 254–274 (VQFMVIGINIAITLFVLIFYV) threads the bilayer. Residues 275–280 (ETLYDR) are Extracellular-facing. Residues 281-301 (IYYLCFLLGITVQTYPLCYYG) form a helical membrane-spanning segment. Over 302 to 340 (TMVQESFAELHYAVFCSNWVDQSASYRGHMLILAERTKR) the chain is Cytoplasmic. A helical membrane pass occupies residues 341–361 (MQLLLAGNLVPIHLSTYVACW). At 362-379 (KGAYSFFTLMADRDGLGS) the chain is on the extracellular side.

It belongs to the insect chemoreceptor superfamily. Heteromeric odorant receptor channel (TC 1.A.69) family. Or2a subfamily. Interacts with Orco. Complexes exist early in the endomembrane system in olfactory sensory neurons (OSNs), coupling these complexes to the conserved ciliary trafficking pathway. In terms of tissue distribution, expressed in 10-40 sensory cells in the third antenna segment and in the maxillary palp.

The protein localises to the cell membrane. Odorant receptor which mediates acceptance or avoidance behavior, depending on its substrates. The odorant receptor repertoire encodes a large collection of odor stimuli that vary widely in identity, intensity, and duration. May form a complex with Orco to form odorant-sensing units, providing sensitive and prolonged odorant signaling and calcium permeability. The chain is Odorant receptor 23a (Or23a) from Drosophila melanogaster (Fruit fly).